Here is a 169-residue protein sequence, read N- to C-terminus: Inorganic pyrophosphatase (169 aa).

K26, R40, and Y52 together coordinate substrate. Mg(2+) contacts are provided by D62, D67, and D99. Residue Y138 participates in substrate binding.

Belongs to the PPase family. In terms of assembly, homohexamer. Mg(2+) serves as cofactor.

The protein resides in the cytoplasm. The enzyme catalyses diphosphate + H2O = 2 phosphate + H(+). In terms of biological role, catalyzes the hydrolysis of inorganic pyrophosphate (PPi) forming two phosphate ions. The protein is Inorganic pyrophosphatase of Thermoplasma volcanium (strain ATCC 51530 / DSM 4299 / JCM 9571 / NBRC 15438 / GSS1).